The chain runs to 87 residues: Small ribosomal subunit protein uS19 (87 aa).

It belongs to the universal ribosomal protein uS19 family.

Protein S19 forms a complex with S13 that binds strongly to the 16S ribosomal RNA. The chain is Small ribosomal subunit protein uS19 (rpsS) from Mycoplasma genitalium (strain ATCC 33530 / DSM 19775 / NCTC 10195 / G37) (Mycoplasmoides genitalium).